The following is a 228-amino-acid chain: Urease subunit gamma/beta (228 aa).

Positions 1–101 are urease gamma; the sequence is MQLTERERDK…LVTVHDPIRG (101 aa). The interval 102–228 is urease beta; sequence AASRRVAGEY…ARAAGFGGAQ (127 aa).

It in the N-terminal section; belongs to the urease gamma subunit family. The protein in the C-terminal section; belongs to the urease beta subunit family. In terms of assembly, heterohexamer of 3 UreC (alpha) and 3 UreAB (gamma/beta) subunits.

The protein localises to the cytoplasm. It carries out the reaction urea + 2 H2O + H(+) = hydrogencarbonate + 2 NH4(+). It participates in nitrogen metabolism; urea degradation; CO(2) and NH(3) from urea (urease route): step 1/1. The chain is Urease subunit gamma/beta from Deinococcus radiodurans (strain ATCC 13939 / DSM 20539 / JCM 16871 / CCUG 27074 / LMG 4051 / NBRC 15346 / NCIMB 9279 / VKM B-1422 / R1).